A 100-amino-acid chain; its full sequence is C-X-C motif chemokine 3 (100 aa).

The N-terminal stretch at Met1–Ala31 is a signal peptide. Disulfide bonds link Cys36–Cys62 and Cys38–Cys78.

It belongs to the intercrine alpha (chemokine CxC) family.

Its subcellular location is the secreted. Ligand for CXCR2. Has chemotactic activity for neutrophils. May play a role in inflammation and exert its effects on endothelial cells in an autocrine fashion. The sequence is that of C-X-C motif chemokine 3 from Mus musculus (Mouse).